A 171-amino-acid chain; its full sequence is Nudix hydrolase DR_0079 (171 aa).

Residues 32–162 (ERVRVVNAFL…EAAKGDLAEL (131 aa)) enclose the Nudix hydrolase domain. The Nudix box signature appears at 69 to 91 (GGAVQSGETYEEAFRREAREELN). Glutamate 85 and glutamate 89 together coordinate Mg(2+).

This sequence belongs to the Nudix hydrolase family. As to quaternary structure, monomer. Mg(2+) serves as cofactor.

Its activity is regulated as follows. Inhibited by zinc, calcium or copper ions. Hydrolase that converts various nucleotide triphosphates (NTPs) to the corresponding nucleotide monophosphates and diphosphate, and nucleotide diphosphates to nucleotide monophosphates and inorganic phosphate. Has a marked preference for cytosine ribonucleoside 5'-diphosphate (CDP) and cytosine ribonucleoside 5'-triphosphate (CTP). Has lower activity towards the deoxyribose nucleotides dCDP and dCTP, and towards dGDP, TDP and UDP. The protein is Nudix hydrolase DR_0079 of Deinococcus radiodurans (strain ATCC 13939 / DSM 20539 / JCM 16871 / CCUG 27074 / LMG 4051 / NBRC 15346 / NCIMB 9279 / VKM B-1422 / R1).